Consider the following 598-residue polypeptide: Nuclear receptor subfamily 4 group A member 1 (598 aa).

Disordered regions lie at residues 1–43 (MPCI…PEAA) and 128–151 (GSDY…PPQL). The segment covering 134 to 145 (SPCSAPSPSTPS) has biased composition (low complexity). Positions 171–466 (RAWTEQLPKA…PAEGKLIFCS (296 aa)) are required for nuclear import. Positions 264–339 (EGRCAVCGDN…VGMVKEVVRT (76 aa)) form a DNA-binding region, nuclear receptor. 2 NR C4-type zinc fingers span residues 267–287 (CAVC…CEGC) and 303–327 (CLAN…FQKC). Residues 268–354 (AVCGDNASCQ…RRGRLPSKPK (87 aa)) form a required for binding NBRE-containing DNA region. Residues 299–361 (AKYICLANKD…KPKQPPETSP (63 aa)) form a required for the interaction with RXRA region. Ser341 is subject to Phosphoserine; by PKA. Residues 341–361 (SLKGRRGRLPSKPKQPPETSP) form a disordered region. Ser351 carries the phosphoserine; by PKA, RPS6KA1 and RPS6KA3 modification. Positions 360–595 (SPAHLLTSLV…PIVDKIFMDT (236 aa)) constitute an NR LBD domain. Residues 521-544 (PRRVEELQNRIASCLKEHVSAEAG) are binds lipopolysaccharide. Residues 584-595 (PPPIVDKIFMDT) form an AF-2 region.

This sequence belongs to the nuclear hormone receptor family. NR4 subfamily. In terms of assembly, binds the NGFI-B response element (NBRE) as a monomer. Binds the Nur response element (NurRE), consisting of two inverse NBRE-related octanucleotide repeats separated by 6 base-pairs, as a dimer. Interacts (via N-terminus) with NLRP3 (via LRR repeat domain); the interaction is direct, requires binding of NR4A1/Nur77 to NBRE-containing dsDNA and lipopolysaccharide, and leads to non-canonical NLRP3 inflammasome activation. Interacts with GADD45GIP1. Interacts with STK11. Interacts with IFI27. Heterodimer (via DNA-binding domain) with RXRA (via C-terminus); DNA-binding of the heterodimer is enhanced by 9-cis retinoic acid. Competes for the RXRA interaction with EP300 and thereby attenuates EP300 mediated acetylation of RXRA. Interacts with NCOA1. Interacts with NCOA2. Interacts with NCOA3. The cofactor is Zn(2+). Phosphorylated at Ser-351 by RPS6KA1 and RPS6KA3 in response to mitogenic or stress stimuli. In terms of processing, acetylated by p300/CBP, acetylation increases stability. Deacetylated by HDAC1.

It is found in the nucleus. Its subcellular location is the cytoplasm. The protein resides in the cytosol. It localises to the mitochondrion. Its function is as follows. Orphan nuclear receptor. Binds the NGFI-B response element (NBRE) 5'-AAAGGTCA-3'. Binds 9-cis-retinoic acid outside of its ligand-binding (NR LBD) domain. Participates in energy homeostasis by sequestrating the kinase STK11 in the nucleus, thereby attenuating cytoplasmic AMPK activation. Regulates the inflammatory response in macrophages by regulating metabolic adaptations during inflammation, including repressing the transcription of genes involved in the citric acid cycle (TCA). Inhibits NF-kappa-B signaling by binding to low-affinity NF-kappa-B binding sites, such as at the IL2 promoter. May act concomitantly with NR4A2 in regulating the expression of delayed-early genes during liver regeneration. Plays a role in the vascular response to injury. Functionally, in the cytosol, upon its detection of both bacterial lipopolysaccharide (LPS) and NBRE-containing mitochondrial DNA released by GSDMD pores during pyroptosis, it promotes non-canonical NLRP3 inflammasome activation by stimulating association of NLRP3 and NEK7. The sequence is that of Nuclear receptor subfamily 4 group A member 1 (NR4A1) from Bos taurus (Bovine).